A 747-amino-acid polypeptide reads, in one-letter code: Transcription factor phm2 (747 aa).

The zn(2)-C6 fungal-type DNA-binding region spans 21–50 (CNACRKRKRVRCDRLHPCSNCASRGLGSTC). Disordered stretches follow at residues 112–150 (GLQNQGSDARSDARCQPTPLSSETEFEYPVAPSPSDHGS) and 414–436 (TAEPRNLYDTDFDEDSSALPESR).

The protein localises to the nucleus. In terms of biological role, transcription factor that regulates the expression of the gene cluster that mediates the biosynthesis of the trans-fused decalin-containing tetramic acid phomasetin. This chain is Transcription factor phm2, found in Pyrenochaetopsis sp.